Reading from the N-terminus, the 394-residue chain is MNDVSRIFPGFYIGSLPAVNRNTLDKYQITHVCSVLNEFQPKWTKIYKYLHIDIYDSPSVDIMKYFDKTFQFIEEGRKDGGVLVHCFAGISRSATICIAYIMRKLNISFEDAHGLVSDARPIIYPNESFIKQLKKYELILKKNRENPQIVEKESEEEDDDEDDDDDDYDSDEDDDDDSEDDDFEEEFDNVVKKKNNNNKKVNVKNTTKVFSNISISSEQTTTSTTTVPTPTLNPETKIEETTTTTTATATATLVEEVVESTSPKATLGEHRYSCRKCSKDLFLDFDILDHEQGQGQTSFKWNKRDNTTCNKSVGANGEQIEDQNKVICTSYFISEIEFSLSQTYSGMEGKLFCPSCNEKLGSWSWSGEQCSCGAWIAPSFQIPKTRVDEKKVLK.

The 141-residue stretch at 2–142 (NDVSRIFPGF…LKKYELILKK (141 aa)) folds into the Tyrosine-protein phosphatase domain. The active-site Phosphocysteine intermediate is cysteine 86. A disordered region spans residues 147–191 (PQIVEKESEEEDDDEDDDDDDYDSDEDDDDDSEDDDFEEEFDNVV). Acidic residues predominate over residues 153-188 (ESEEEDDDEDDDDDDYDSDEDDDDDSEDDDFEEEFD).

Belongs to the protein-tyrosine phosphatase family. Non-receptor class dual specificity subfamily.

The catalysed reaction is O-phospho-L-tyrosyl-[protein] + H2O = L-tyrosyl-[protein] + phosphate. The enzyme catalyses O-phospho-L-seryl-[protein] + H2O = L-seryl-[protein] + phosphate. It carries out the reaction O-phospho-L-threonyl-[protein] + H2O = L-threonyl-[protein] + phosphate. Functionally, has a dual specificity toward Ser/Thr and Tyr-containing proteins. In Dictyostelium discoideum (Social amoeba), this protein is Probable dual specificity protein phosphatase DDB_G0281963.